The following is a 168-amino-acid chain: G/U mismatch-specific DNA glycosylase (168 aa).

It belongs to the uracil-DNA glycosylase (UDG) superfamily. TDG/mug family. In terms of assembly, binds DNA as a monomer.

The protein resides in the cytoplasm. The catalysed reaction is Specifically hydrolyzes mismatched double-stranded DNA and polynucleotides, releasing free uracil.. Excises ethenocytosine and uracil, which can arise by alkylation or deamination of cytosine, respectively, from the corresponding mispairs with guanine in ds-DNA. It is capable of hydrolyzing the carbon-nitrogen bond between the sugar-phosphate backbone of the DNA and the mispaired base. The complementary strand guanine functions in substrate recognition. Required for DNA damage lesion repair in stationary-phase cells. The chain is G/U mismatch-specific DNA glycosylase from Escherichia fergusonii (strain ATCC 35469 / DSM 13698 / CCUG 18766 / IAM 14443 / JCM 21226 / LMG 7866 / NBRC 102419 / NCTC 12128 / CDC 0568-73).